The chain runs to 608 residues: Elongation factor 4 (608 aa).

Residues 11–193 (DRIRNFSIIA…QIVQKIPAPS (183 aa)) form the tr-type G domain. Residues 23-28 (DHGKST) and 140-143 (NKID) contribute to the GTP site.

It belongs to the TRAFAC class translation factor GTPase superfamily. Classic translation factor GTPase family. LepA subfamily.

It localises to the cell membrane. The catalysed reaction is GTP + H2O = GDP + phosphate + H(+). Required for accurate and efficient protein synthesis under certain stress conditions. May act as a fidelity factor of the translation reaction, by catalyzing a one-codon backward translocation of tRNAs on improperly translocated ribosomes. Back-translocation proceeds from a post-translocation (POST) complex to a pre-translocation (PRE) complex, thus giving elongation factor G a second chance to translocate the tRNAs correctly. Binds to ribosomes in a GTP-dependent manner. This is Elongation factor 4 from Anoxybacillus flavithermus (strain DSM 21510 / WK1).